The following is a 330-amino-acid chain: Beta-ketoacyl-[acyl-carrier-protein] synthase III (330 aa).

Catalysis depends on residues Cys116 and His257. The interval 258 to 262 (QANQR) is ACP-binding. Asn287 is a catalytic residue.

The protein belongs to the thiolase-like superfamily. FabH family. Homodimer.

Its subcellular location is the cytoplasm. The enzyme catalyses malonyl-[ACP] + acetyl-CoA + H(+) = 3-oxobutanoyl-[ACP] + CO2 + CoA. It participates in lipid metabolism; fatty acid biosynthesis. In terms of biological role, catalyzes the condensation reaction of fatty acid synthesis by the addition to an acyl acceptor of two carbons from malonyl-ACP. Catalyzes the first condensation reaction which initiates fatty acid synthesis and may therefore play a role in governing the total rate of fatty acid production. Possesses both acetoacetyl-ACP synthase and acetyl transacylase activities. Its substrate specificity determines the biosynthesis of branched-chain and/or straight-chain of fatty acids. This Synechocystis sp. (strain ATCC 27184 / PCC 6803 / Kazusa) protein is Beta-ketoacyl-[acyl-carrier-protein] synthase III.